The primary structure comprises 224 residues: Acyl-protein thioesterase 1 (224 aa).

Residues serine 116, aspartate 170, and histidine 203 each act as charge relay system in the active site.

The protein belongs to the AB hydrolase superfamily. AB hydrolase 2 family.

Its subcellular location is the cytoplasm. It localises to the nucleus. It carries out the reaction S-hexadecanoyl-L-cysteinyl-[protein] + H2O = L-cysteinyl-[protein] + hexadecanoate + H(+). In terms of biological role, hydrolyzes fatty acids from S-acylated cysteine residues in proteins with a strong preference for palmitoylated G-alpha proteins over other acyl substrates. Mediates the deacylation of G-alpha proteins such as GPA1 in vivo, but has weak or no activity toward palmitoylated Ras proteins. Has weak lysophospholipase activity in vitro; however such activity may not exist in vivo. The sequence is that of Acyl-protein thioesterase 1 from Schizosaccharomyces pombe (strain 972 / ATCC 24843) (Fission yeast).